We begin with the raw amino-acid sequence, 254 residues long: Type III pantothenate kinase (254 aa).

22–29 (VLGNTHVR) serves as a coordination point for ATP. Substrate is bound by residues Tyr89 and 93–96 (GLDR). Catalysis depends on Asp95, which acts as the Proton acceptor. A K(+)-binding site is contributed by Asp115. Residue Thr118 participates in ATP binding. Thr173 is a substrate binding site.

It belongs to the type III pantothenate kinase family. In terms of assembly, homodimer. It depends on NH4(+) as a cofactor. Requires K(+) as cofactor.

It is found in the cytoplasm. It carries out the reaction (R)-pantothenate + ATP = (R)-4'-phosphopantothenate + ADP + H(+). It functions in the pathway cofactor biosynthesis; coenzyme A biosynthesis; CoA from (R)-pantothenate: step 1/5. Functionally, catalyzes the phosphorylation of pantothenate (Pan), the first step in CoA biosynthesis. The protein is Type III pantothenate kinase of Synechococcus sp. (strain JA-2-3B'a(2-13)) (Cyanobacteria bacterium Yellowstone B-Prime).